The chain runs to 141 residues: Hemoglobin subunit alpha-A (141 aa).

Residues 1 to 141 enclose the Globin domain; it reads VLSASDKSNV…VGTVLTAKYR (141 aa). Position 58 (histidine 58) interacts with O2. Histidine 87 serves as a coordination point for heme b.

The protein belongs to the globin family. As to quaternary structure, heterotetramer of two alpha chains and two beta chains. As to expression, red blood cells.

Functionally, involved in oxygen transport from the lung to the various peripheral tissues. This is Hemoglobin subunit alpha-A (HBAA) from Streptopelia orientalis (Eastern turtle dove).